The chain runs to 90 residues: uncharacterized protein (90 aa).

The interval 1 to 26 (MFKRSVSRLFCAPAPAPAPRKQPGGR) is disordered. The stretch at 33 to 66 (NLNQSVKKQLNHLEVLERIKKQRKEQKNNRNQVD) forms a coiled coil.

This is an uncharacterized protein from Dictyostelium discoideum (Social amoeba).